Reading from the N-terminus, the 347-residue chain is N-acetyl-gamma-glutamyl-phosphate reductase (347 aa).

Cysteine 151 is an active-site residue.

The protein belongs to the NAGSA dehydrogenase family. Type 1 subfamily.

The protein localises to the cytoplasm. It carries out the reaction N-acetyl-L-glutamate 5-semialdehyde + phosphate + NADP(+) = N-acetyl-L-glutamyl 5-phosphate + NADPH + H(+). The protein operates within amino-acid biosynthesis; L-arginine biosynthesis; N(2)-acetyl-L-ornithine from L-glutamate: step 3/4. In terms of biological role, catalyzes the NADPH-dependent reduction of N-acetyl-5-glutamyl phosphate to yield N-acetyl-L-glutamate 5-semialdehyde. This is N-acetyl-gamma-glutamyl-phosphate reductase from Corynebacterium aurimucosum (strain ATCC 700975 / DSM 44827 / CIP 107346 / CN-1) (Corynebacterium nigricans).